The following is a 487-amino-acid chain: Serine/threonine-protein kinase 4 (487 aa).

M1 carries the N-acetylmethionine modification. The residue at position 3 (T3) is a Phosphothreonine. Positions 30–281 constitute a Protein kinase domain; that stretch reads FDVLEKLGEG…ATQLLQHPFV (252 aa). Residues 36-44 and K59 each bind ATP; that span reads LGEGSYGSV. The Proton acceptor role is filled by D149. T183 is subject to Phosphothreonine; by autocatalysis. S265 is modified (phosphoserine). A coiled-coil region spans residues 290–310; it reads LRDLINEAMDVKLKRQEAQQR. The tract at residues 305-338 is disordered; sequence QEAQQREVDQDDEENSEEDELDSGTMVRAVGDDM. Over residues 313–326 the composition is skewed to acidic residues; the sequence is DQDDEENSEEDELD. S320 is subject to Phosphoserine. A phosphothreonine mark is found at T340 and T367. T387 is subject to Phosphothreonine; by PKB/AKT1. Phosphoserine is present on residues S410 and S414. Position 433 is a phosphotyrosine (Y433). The region spanning 433–480 is the SARAH domain; that stretch reads YEFLKSWTVEDLQKRLLALDPMMEQEIEEIRQKYQSKRQPILDAIEAK.

Belongs to the protein kinase superfamily. STE Ser/Thr protein kinase family. STE20 subfamily. As to quaternary structure, homodimer; mediated via the coiled-coil region. Interacts with NORE1, which inhibits autoactivation. Interacts with and stabilizes SAV1. Interacts with RASSF1. Interacts with FOXO3. Interacts with RASSF2 (via SARAH domain). Interacts with AR, PKB/AKT1, TNNI3 and SIRT1. Interacts with DLG5 (via PDZ domain 3). Interacts with MARK3 and SCRIB in the presence of DLG5. Mg(2+) serves as cofactor. In terms of processing, autophosphorylated on serine and threonine residues. Phosphorylation at Thr-387 by PKB/AKT1, leads to inhibition of its: kinase activity, nuclear translocation and autophosphorylation at Thr-183. It also diminishes its cleavage by caspases and its ability to phosphorylate FOXO3. Post-translationally, proteolytically cleaved by caspase-3 during apoptosis at Asp-326 and Asp-349 resulting in a 37 kDa or a 39 kDa subunit respectively. The 39 kDa subunit is further cleaved into the 37 kDa form. Proteolytic cleavage results in kinase activation and nuclear translocation of the truncated form (MST1/N). It is less likely that cleavage at Asp-349 is a prerequisite for activation as this site is not conserved in the murine ortholog.

Its subcellular location is the cytoplasm. The protein localises to the nucleus. It catalyses the reaction L-seryl-[protein] + ATP = O-phospho-L-seryl-[protein] + ADP + H(+). The enzyme catalyses L-threonyl-[protein] + ATP = O-phospho-L-threonyl-[protein] + ADP + H(+). Inhibited by the C-terminal non-catalytic region. Activated by caspase-cleavage. Full activation also requires homodimerization and autophosphorylation of Thr-183. Activated by RASSF1 which acts by preventing its dephosphorylation. Its function is as follows. Stress-activated, pro-apoptotic kinase which, following caspase-cleavage, enters the nucleus and induces chromatin condensation followed by internucleosomal DNA fragmentation. Key component of the Hippo signaling pathway which plays a pivotal role in organ size control and tumor suppression by restricting proliferation and promoting apoptosis. The core of this pathway is composed of a kinase cascade wherein STK3/MST2 and STK4/MST1, in complex with its regulatory protein SAV1, phosphorylates and activates LATS1/2 in complex with its regulatory protein MOB1, which in turn phosphorylates and inactivates YAP1 oncoprotein and WWTR1/TAZ. Phosphorylation of YAP1 by LATS2 inhibits its translocation into the nucleus to regulate cellular genes important for cell proliferation, cell death, and cell migration. STK3/MST2 and STK4/MST1 are required to repress proliferation of mature hepatocytes, to prevent activation of facultative adult liver stem cells (oval cells), and to inhibit tumor formation. Phosphorylates 'Ser-14' of histone H2B (H2BS14ph) during apoptosis. Phosphorylates FOXO3 upon oxidative stress, which results in its nuclear translocation and cell death initiation. Phosphorylates MOBKL1A, MOBKL1B and RASSF2. Phosphorylates TNNI3 (cardiac Tn-I) and alters its binding affinity to TNNC1 (cardiac Tn-C) and TNNT2 (cardiac Tn-T). Phosphorylates FOXO1 on 'Ser-212' and regulates its activation and stimulates transcription of PMAIP1 in a FOXO1-dependent manner. Phosphorylates SIRT1 and inhibits SIRT1-mediated p53/TP53 deacetylation, thereby promoting p53/TP53 dependent transcription and apoptosis upon DNA damage. Acts as an inhibitor of PKB/AKT1. Phosphorylates AR on 'Ser-650' and suppresses its activity by intersecting with PKB/AKT1 signaling and antagonizing formation of AR-chromatin complexes. This Lemur catta (Ring-tailed lemur) protein is Serine/threonine-protein kinase 4 (STK4).